We begin with the raw amino-acid sequence, 291 residues long: Protease HtpX homolog (291 aa).

Helical transmembrane passes span 4 to 24 and 38 to 58; these read IVLF…SARL and MGML…ISLM. Residue His-144 participates in Zn(2+) binding. Glu-145 is a catalytic residue. His-148 contributes to the Zn(2+) binding site. 2 helical membrane passes run 152–172 and 199–219; these read GDMV…IFLA and VSSI…VMFF. Glu-224 is a binding site for Zn(2+).

Belongs to the peptidase M48B family. Zn(2+) serves as cofactor.

It localises to the cell inner membrane. The chain is Protease HtpX homolog from Prosthecochloris aestuarii (strain DSM 271 / SK 413).